A 227-amino-acid polypeptide reads, in one-letter code: 2-C-methyl-D-erythritol 4-phosphate cytidylyltransferase (227 aa).

It belongs to the IspD/TarI cytidylyltransferase family. IspD subfamily.

It catalyses the reaction 2-C-methyl-D-erythritol 4-phosphate + CTP + H(+) = 4-CDP-2-C-methyl-D-erythritol + diphosphate. It functions in the pathway isoprenoid biosynthesis; isopentenyl diphosphate biosynthesis via DXP pathway; isopentenyl diphosphate from 1-deoxy-D-xylulose 5-phosphate: step 2/6. Catalyzes the formation of 4-diphosphocytidyl-2-C-methyl-D-erythritol from CTP and 2-C-methyl-D-erythritol 4-phosphate (MEP). This chain is 2-C-methyl-D-erythritol 4-phosphate cytidylyltransferase, found in Bordetella parapertussis (strain 12822 / ATCC BAA-587 / NCTC 13253).